The chain runs to 322 residues: Acetyl-coenzyme A carboxylase carboxyl transferase subunit beta (322 aa).

Residues 24–293 (LWIKCPDTGQ…PAVEEIAASD (270 aa)) enclose the CoA carboxyltransferase N-terminal domain.

This sequence belongs to the AccD/PCCB family. As to quaternary structure, acetyl-CoA carboxylase is a heterohexamer composed of biotin carboxyl carrier protein (AccB), biotin carboxylase (AccC) and two subunits each of ACCase subunit alpha (AccA) and ACCase subunit beta (AccD).

It is found in the cytoplasm. It carries out the reaction N(6)-carboxybiotinyl-L-lysyl-[protein] + acetyl-CoA = N(6)-biotinyl-L-lysyl-[protein] + malonyl-CoA. The protein operates within lipid metabolism; malonyl-CoA biosynthesis; malonyl-CoA from acetyl-CoA: step 1/1. In terms of biological role, component of the acetyl coenzyme A carboxylase (ACC) complex. Biotin carboxylase (BC) catalyzes the carboxylation of biotin on its carrier protein (BCCP) and then the CO(2) group is transferred by the transcarboxylase to acetyl-CoA to form malonyl-CoA. The sequence is that of Acetyl-coenzyme A carboxylase carboxyl transferase subunit beta from Rhodopseudomonas palustris (strain BisB5).